Here is a 374-residue protein sequence, read N- to C-terminus: Methylthioribose-1-phosphate isomerase (374 aa).

D256 acts as the Proton donor in catalysis.

This sequence belongs to the eIF-2B alpha/beta/delta subunits family. MtnA subfamily.

It is found in the cytoplasm. It localises to the nucleus. The catalysed reaction is 5-(methylsulfanyl)-alpha-D-ribose 1-phosphate = 5-(methylsulfanyl)-D-ribulose 1-phosphate. It functions in the pathway amino-acid biosynthesis; L-methionine biosynthesis via salvage pathway; L-methionine from S-methyl-5-thio-alpha-D-ribose 1-phosphate: step 1/6. In terms of biological role, catalyzes the interconversion of methylthioribose-1-phosphate (MTR-1-P) into methylthioribulose-1-phosphate (MTRu-1-P). The protein is Methylthioribose-1-phosphate isomerase of Leishmania braziliensis.